Here is a 280-residue protein sequence, read N- to C-terminus: Undecaprenyl-diphosphatase (280 aa).

8 helical membrane-spanning segments follow: residues phenylalanine 2–leucine 22, alanine 45–isoleucine 65, tryptophan 86–leucine 106, phenylalanine 114–leucine 134, leucine 147–phenylalanine 167, serine 188–tryptophan 208, glycine 223–isoleucine 243, and phenylalanine 255–isoleucine 275.

This sequence belongs to the UppP family.

It is found in the cell membrane. It catalyses the reaction di-trans,octa-cis-undecaprenyl diphosphate + H2O = di-trans,octa-cis-undecaprenyl phosphate + phosphate + H(+). Its function is as follows. Catalyzes the dephosphorylation of undecaprenyl diphosphate (UPP). Confers resistance to bacitracin. The protein is Undecaprenyl-diphosphatase of Streptococcus sanguinis (strain SK36).